Here is a 324-residue protein sequence, read N- to C-terminus: NADH-ubiquinone oxidoreductase chain 1 (324 aa).

A run of 8 helical transmembrane segments spans residues 5–25 (ILLYLINPLAYIVPILLATAF), 75–95 (FLFLATPTLALTLALLMWMPL), 106–126 (LGLLFILAVSSLTVYTILGSG), 146–166 (ISYEVSLGLILLSMIIFTGGF), 177–197 (TVWLLVPGWPLAMMWYISTLA), 228–248 (LFFLAEYTNILMMNTLSVILF), 259–279 (QISTFYLMMKATLLTLIFLWI), and 299–319 (FLPLTLALILWHAALPIATAS).

Belongs to the complex I subunit 1 family.

It localises to the mitochondrion inner membrane. The enzyme catalyses a ubiquinone + NADH + 5 H(+)(in) = a ubiquinol + NAD(+) + 4 H(+)(out). In terms of biological role, core subunit of the mitochondrial membrane respiratory chain NADH dehydrogenase (Complex I) that is believed to belong to the minimal assembly required for catalysis. Complex I functions in the transfer of electrons from NADH to the respiratory chain. The immediate electron acceptor for the enzyme is believed to be ubiquinone. The chain is NADH-ubiquinone oxidoreductase chain 1 (MT-ND1) from Squalus acanthias (Spiny dogfish).